Reading from the N-terminus, the 193-residue chain is Peptidyl-tRNA hydrolase (193 aa).

Residue Y17 participates in tRNA binding. Catalysis depends on H22, which acts as the Proton acceptor. TRNA-binding residues include Y68, N70, and N116.

It belongs to the PTH family. Monomer.

The protein resides in the cytoplasm. The enzyme catalyses an N-acyl-L-alpha-aminoacyl-tRNA + H2O = an N-acyl-L-amino acid + a tRNA + H(+). Hydrolyzes ribosome-free peptidyl-tRNAs (with 1 or more amino acids incorporated), which drop off the ribosome during protein synthesis, or as a result of ribosome stalling. In terms of biological role, catalyzes the release of premature peptidyl moieties from peptidyl-tRNA molecules trapped in stalled 50S ribosomal subunits, and thus maintains levels of free tRNAs and 50S ribosomes. The protein is Peptidyl-tRNA hydrolase of Acinetobacter baumannii (strain AB0057).